The sequence spans 877 residues: Potassium transporter 23 (877 aa).

Disordered stretches follow at residues 1-60 and 72-92; these read MDDD…SLDG and ASAG…RASS. Residues 1-126 are Cytoplasmic-facing; that stretch reads MDDDDSGIQE…RGAHGHSSKE (126 aa). Residues 12 to 28 are compositionally biased toward pro residues; it reads PAPPPPPPPPPPPPPPL. Residues 76–86 show a composition bias toward gly residues; it reads GASGGGGGGGP. Residues 127–147 traverse the membrane as a helical segment; the sequence is ISMLSTVAMAFQTLGVVYGDM. The Extracellular portion of the chain corresponds to 148 to 173; sequence GTSPLYVFSDVFSKVPIKSEVEILGA. The chain crosses the membrane as a helical span at residues 174 to 194; that stretch reads LSLVMYTIALIPFAKYVFIVL. The Cytoplasmic segment spans residues 195–260; that stretch reads KANDNGEGGT…SLEKNPVFKN (66 aa). Residues 261 to 281 traverse the membrane as a helical segment; the sequence is ILLFLVLMGTSMVIGDGILTP. Over 282 to 295 the chain is Extracellular; it reads SMSVMSAVSGLQGR. The chain crosses the membrane as a helical span at residues 296–316; the sequence is VPGFGTDAVVIVSILFLVLLF. At 317–325 the chain is on the cytoplasmic side; sequence SVQRFGTGK. Residues 326–346 traverse the membrane as a helical segment; the sequence is VGFMFAPILALWFINLGTIGI. The Extracellular portion of the chain corresponds to 347-379; it reads YNLAKYDISVVRAFNPVYIYLFFQTNGIKAWSA. A helical transmembrane segment spans residues 380–400; it reads LGGCVLCITGAEAMFADLGHF. Residues 401–406 lie on the Cytoplasmic side of the membrane; sequence SVKSIQ. Residues 407–427 form a helical membrane-spanning segment; the sequence is VAFTAVVFPCLLIAYMGQAAY. The Extracellular portion of the chain corresponds to 428-441; the sequence is LMKYPFAVERIFYD. Residues 442–462 traverse the membrane as a helical segment; sequence SVPEILFWPVFVIATLAAMIA. Residues 463–498 lie on the Cytoplasmic side of the membrane; sequence SQAMISATFSCIKQAMALGCFPRIKIIHTSKKVMGQ. The chain crosses the membrane as a helical span at residues 499–519; it reads IYIPVMNWFLMVMCIIIVATF. At 520–524 the chain is on the extracellular side; the sequence is RSTND. The helical transmembrane segment at 525–545 threads the bilayer; that stretch reads IANAYGIAEVGVMMVSTALVT. The Cytoplasmic segment spans residues 546-555; the sequence is LVMLLIWQTN. A helical transmembrane segment spans residues 556–578; it reads LFLVMCFPVIFGSVEFVYLTAVL. Topologically, residues 579–583 are extracellular; it reads SKIQE. A helical transmembrane segment spans residues 584-604; that stretch reads GGWLPLAFSSLFLCIMYTWNY. Over 605–877 the chain is Cytoplasmic; sequence GSVLKYQSEM…IMRVGMTYMV (273 aa).

The protein belongs to the HAK/KUP transporter (TC 2.A.72.3) family.

Its subcellular location is the membrane. Its function is as follows. High-affinity potassium transporter. The polypeptide is Potassium transporter 23 (HAK23) (Oryza sativa subsp. japonica (Rice)).